The following is a 382-amino-acid chain: ATP phosphoribosyltransferase regulatory subunit (382 aa).

Belongs to the class-II aminoacyl-tRNA synthetase family. HisZ subfamily. Heteromultimer composed of HisG and HisZ subunits.

It is found in the cytoplasm. Its pathway is amino-acid biosynthesis; L-histidine biosynthesis; L-histidine from 5-phospho-alpha-D-ribose 1-diphosphate: step 1/9. In terms of biological role, required for the first step of histidine biosynthesis. May allow the feedback regulation of ATP phosphoribosyltransferase activity by histidine. This is ATP phosphoribosyltransferase regulatory subunit from Burkholderia cenocepacia (strain HI2424).